We begin with the raw amino-acid sequence, 221 residues long: NAD(P)H-hydrate epimerase (221 aa).

A YjeF N-terminal domain is found at 9-219 (MRELETAAVK…NIGLPKELLS (211 aa)). 60-64 (GNGGD) provides a ligand contact to (6S)-NADPHX. K(+) contacts are provided by N61 and D131. (6S)-NADPHX-binding positions include 135 to 141 (GIGFKGE), Y146, and D164. S167 is a K(+) binding site.

The protein belongs to the NnrE/AIBP family. Requires K(+) as cofactor.

It catalyses the reaction (6R)-NADHX = (6S)-NADHX. The catalysed reaction is (6R)-NADPHX = (6S)-NADPHX. Its function is as follows. Catalyzes the epimerization of the S- and R-forms of NAD(P)HX, a damaged form of NAD(P)H that is a result of enzymatic or heat-dependent hydration. This is a prerequisite for the S-specific NAD(P)H-hydrate dehydratase to allow the repair of both epimers of NAD(P)HX. The sequence is that of NAD(P)H-hydrate epimerase from Elusimicrobium minutum (strain Pei191).